Consider the following 101-residue polypeptide: Vacuolar ATPase assembly integral membrane protein VMA21 (101 aa).

Residues 1 to 25 are Cytoplasmic-facing; sequence MERPDKAALNALQPPEFRNESSLAS. The helical transmembrane segment at 26–46 threads the bilayer; sequence TLKTLLFFTALMITVPIGLYF. Over 47–65 the chain is Lumenal; the sequence is TTKSYIFEGALGMSNRDSY. A helical membrane pass occupies residues 66-86; that stretch reads FYAAIVAVVAVHVVLALFVYV. The Cytoplasmic portion of the chain corresponds to 87 to 101; sequence AWNEGSRQWREGKQD.

It belongs to the VMA21 family. In terms of assembly, associates with the V0 complex of the vacuolar ATPase (V-ATPase). Interacts with ATP6AP2.

Its subcellular location is the endoplasmic reticulum membrane. It localises to the endoplasmic reticulum-Golgi intermediate compartment membrane. The protein resides in the cytoplasmic vesicle. It is found in the COPII-coated vesicle membrane. Its function is as follows. Required for the assembly of the V0 complex of the vacuolar ATPase (V-ATPase) in the endoplasmic reticulum. This chain is Vacuolar ATPase assembly integral membrane protein VMA21, found in Homo sapiens (Human).